The chain runs to 438 residues: Putative F-box/FBD/LRR-repeat protein At5g44950 (438 aa).

An F-box domain is found at 3 to 49; that stretch reads RDRISELPDGLLNHILMYLHIEESIRTSVLSSRWRKLWLKVPGLDVN. LRR repeat units lie at residues 246 to 275 and 286 to 310; these read LSSL…DLTK and ISSV…KIGQ. The FBD domain maps to 355–407; the sequence is PEQIDFTNLPRCLISTLEYVEIKQLTMREESGIKLVKYFLENSAVLKKLTLSF.

In Arabidopsis thaliana (Mouse-ear cress), this protein is Putative F-box/FBD/LRR-repeat protein At5g44950.